The following is a 210-amino-acid chain: Helix-loop-helix protein 26 (210 aa).

The span at 1-15 (MSSSPTSSSSGSPSS) shows a compositional bias: low complexity. Residues 1 to 33 (MSSSPTSSSSGSPSSHGHRSETEKQRRDDTNDL) form a disordered region. Residues 14–65 (SSHGHRSETEKQRRDDTNDLLNEFKKIVQKSESEKLSKEEVLFRIVKLLSGI) enclose the bHLH domain. The segment covering 18-33 (HRSETEKQRRDDTNDL) has biased composition (basic and acidic residues).

Homodimer; binds to DNA as a homodimer. As to expression, expressed in intestinal cells (at protein level).

Its subcellular location is the nucleus. In terms of biological role, as a homodimer binds DNA via the E-box sequence 5'-CACGTG-3'. Represses lag-2 transcription during embryogenesis via Notch signaling, in an unc-37-dependent manner. Also represses tbx-37 independent of Notch signaling. In the intestine, plays a role in probiotic-mediated protection against infections by pathogens such as S.enterica. This is most likely by positively regulating the expression of genes such as bar-1 upon exposure to probiotic bacteria such as the E.faecium. This Caenorhabditis elegans protein is Helix-loop-helix protein 26.